The sequence spans 155 residues: Small ribosomal subunit protein uS7c (155 aa).

This sequence belongs to the universal ribosomal protein uS7 family. Part of the 30S ribosomal subunit.

The protein localises to the plastid. It is found in the chloroplast. Its function is as follows. One of the primary rRNA binding proteins, it binds directly to 16S rRNA where it nucleates assembly of the head domain of the 30S subunit. This is Small ribosomal subunit protein uS7c (rps7) from Cryptomeria japonica (Japanese cedar).